We begin with the raw amino-acid sequence, 368 residues long: Zinc finger protein 24 (368 aa).

K22 is covalently cross-linked (Glycyl lysine isopeptide (Lys-Gly) (interchain with G-Cter in SUMO2)). K27 participates in a covalent cross-link: Glycyl lysine isopeptide (Lys-Gly) (interchain with G-Cter in SUMO1); alternate. K27 is covalently cross-linked (Glycyl lysine isopeptide (Lys-Gly) (interchain with G-Cter in SUMO2); alternate). The SCAN box domain occupies 52–134 (RQRFRQFGYQ…TVLEDLESEL (83 aa)). Phosphoserine occurs at positions 132 and 142. Residues K147, K177, and K236 each participate in a glycyl lysine isopeptide (Lys-Gly) (interchain with G-Cter in SUMO2) cross-link. The C2H2-type 1 zinc finger occupies 251–273 (HICDECGKHFSQGSALILHQRIH). The tract at residues 251 to 301 (HICDECGKHFSQGSALILHQRIHSGEKPYGCVECGKAFSRSSILVQHQRVH) is necessary and sufficient for nuclear localization. Residue S274 is modified to Phosphoserine. Glycyl lysine isopeptide (Lys-Gly) (interchain with G-Cter in SUMO2) cross-links involve residues K277 and K286. C2H2-type zinc fingers lie at residues 279–301 (YGCVECGKAFSRSSILVQHQRVH), 307–329 (YKCLECGKAFSQNSGLINHQRIH), and 335–357 (YECVQCGKSYSQSSNLFRHQRRH). Position 292 is a phosphoserine (S292). Position 335 is a phosphotyrosine (Y335). Residues K361 and K367 each participate in a glycyl lysine isopeptide (Lys-Gly) (interchain with G-Cter in SUMO2) cross-link.

Belongs to the krueppel C2H2-type zinc-finger protein family. Post-translationally, sumoylated. As to expression, expressed in many tissues except in heart.

Its subcellular location is the nucleus. Transcription factor required for myelination of differentiated oligodendrocytes. Required for the conversion of oligodendrocytes from the premyelinating to the myelinating state. In the developing central nervous system (CNS), involved in the maintenance in the progenitor stage by promoting the cell cycle. Specifically binds to the 5'-TCAT-3' DNA sequence. Has transcription repressor activity in vitro. The chain is Zinc finger protein 24 (ZNF24) from Homo sapiens (Human).